A 633-amino-acid chain; its full sequence is ATP-dependent clpX-like chaperone, mitochondrial (633 aa).

A mitochondrion-targeting transit peptide spans 1 to 56 (MSSCGACTCGAAAARLLTTSLTSAQRGISCGRIHVPVLGRLGTLDTQILRRAPLRT). Positions 65–101 (ASKDGTNKDGSGDGNKKSVTEGSSKKSGSGNSGKGGN) are disordered. Positions 69–83 (GTNKDGSGDGNKKSV) are enriched in basic and acidic residues. Over residues 84 to 93 (TEGSSKKSGS) the composition is skewed to low complexity. One can recognise a ClpX-type ZB domain in the interval 93–146 (SGNSGKGGNQLRCPKCGDLCTHVETFVSSTRFVKCEKCHHFFVVLSEADSKKSI). Zn(2+)-binding residues include Cys105, Cys108, Cys127, and Cys130. Position 294–301 (294–301 (PTGSGKTL)) interacts with ATP. Lys437 carries the post-translational modification N6-acetyllysine. The segment covering 598–610 (KEPGYIRAPSKES) has biased composition (basic and acidic residues). The segment at 598-633 (KEPGYIRAPSKESSEEDYDSGVEEDGWPRQADAANS) is disordered. Residues 611–622 (SEEDYDSGVEED) show a composition bias toward acidic residues. The residue at position 617 (Ser617) is a Phosphoserine.

The protein belongs to the ClpX chaperone family. Homohexamer that forms a ring structure; this hexamerization requires ATP binding. Component of the ClpXP complex formed by the assembly of two CLPP heptameric rings with two CLPX hexameric rings, giving rise to a symmetrical structure with two central CLPP rings flanked by a CLPX ring at either end of the complex. Interacts with TFAM.

Its subcellular location is the mitochondrion. It localises to the mitochondrion matrix. The protein localises to the mitochondrion nucleoid. It catalyses the reaction ATP + H2O = ADP + phosphate + H(+). Functionally, ATP-dependent chaperone that functions as an unfoldase. As part of the ClpXP protease complex, it recognizes specific protein substrates, unfolds them using energy derived from ATP hydrolysis, and then translocates them to the proteolytic subunit (CLPP) of the ClpXP complex for degradation. Thanks to its chaperone activity, it also functions in the incorporation of the pyridoxal phosphate cofactor into 5-aminolevulinate synthase, thereby activating 5-aminolevulinate (ALA) synthesis, the first step in heme biosynthesis. This chaperone is also involved in the control of mtDNA nucleoid distribution, by regulating mitochondrial transcription factor A (TFAM) activity. The chain is ATP-dependent clpX-like chaperone, mitochondrial from Rattus norvegicus (Rat).